Consider the following 295-residue polypeptide: Ankyrin repeat and SOCS box protein 17 (295 aa).

Residues 146–176 (SGITPLLYVAQTRQSNILKILLQYGILEREK) form an ANK repeat. The SOCS box domain maps to 232 to 295 (LGRRPIISNW…RLQKYLNLES (64 aa)).

Belongs to the ankyrin SOCS box (ASB) family.

Its pathway is protein modification; protein ubiquitination. In terms of biological role, may be a substrate-recognition component of a SCF-like ECS (Elongin-Cullin-SOCS-box protein) E3 ubiquitin-protein ligase complex which mediates the ubiquitination and subsequent proteasomal degradation of target proteins. The sequence is that of Ankyrin repeat and SOCS box protein 17 (ASB17) from Canis lupus familiaris (Dog).